Reading from the N-terminus, the 62-residue chain is Large ribosomal subunit protein uL29 (62 aa).

This sequence belongs to the universal ribosomal protein uL29 family.

In Amoebophilus asiaticus (strain 5a2), this protein is Large ribosomal subunit protein uL29.